Reading from the N-terminus, the 576-residue chain is Proline--tRNA ligase (576 aa).

It belongs to the class-II aminoacyl-tRNA synthetase family. ProS type 1 subfamily. In terms of assembly, homodimer.

It localises to the cytoplasm. The enzyme catalyses tRNA(Pro) + L-proline + ATP = L-prolyl-tRNA(Pro) + AMP + diphosphate. Its function is as follows. Catalyzes the attachment of proline to tRNA(Pro) in a two-step reaction: proline is first activated by ATP to form Pro-AMP and then transferred to the acceptor end of tRNA(Pro). As ProRS can inadvertently accommodate and process non-cognate amino acids such as alanine and cysteine, to avoid such errors it has two additional distinct editing activities against alanine. One activity is designated as 'pretransfer' editing and involves the tRNA(Pro)-independent hydrolysis of activated Ala-AMP. The other activity is designated 'posttransfer' editing and involves deacylation of mischarged Ala-tRNA(Pro). The misacylated Cys-tRNA(Pro) is not edited by ProRS. The chain is Proline--tRNA ligase from Thiobacillus denitrificans (strain ATCC 25259 / T1).